Reading from the N-terminus, the 127-residue chain is Small ribosomal subunit protein uS13 (127 aa).

Residues 97 to 127 (PVRGQRTKTNARTRKGPRKTVAGKKGVKDLR) are disordered. Positions 101–118 (QRTKTNARTRKGPRKTVA) are enriched in basic residues.

The protein belongs to the universal ribosomal protein uS13 family. Part of the 30S ribosomal subunit. Forms a loose heterodimer with protein S19. Forms two bridges to the 50S subunit in the 70S ribosome.

Located at the top of the head of the 30S subunit, it contacts several helices of the 16S rRNA. In the 70S ribosome it contacts the 23S rRNA (bridge B1a) and protein L5 of the 50S subunit (bridge B1b), connecting the 2 subunits; these bridges are implicated in subunit movement. Contacts the tRNAs in the A and P-sites. This is Small ribosomal subunit protein uS13 from Rhodopirellula baltica (strain DSM 10527 / NCIMB 13988 / SH1).